The chain runs to 285 residues: Mediator of RNA polymerase II transcription subunit 4 (285 aa).

The span at 1-13 (MSTPGPVPSSTSV) shows a compositional bias: low complexity. The tract at residues 1–25 (MSTPGPVPSSTSVATLPFSAQDKTQ) is disordered. Residues 31–115 (ELQSVGIYQD…TREILETLNT (85 aa)) are a coiled coil. The tract at residues 206–285 (DNVNNDNNTS…DLDLFNPDEF (80 aa)) is disordered. Composition is skewed to basic and acidic residues over residues 216-250 (KIDE…RRGS) and 257-267 (GKEDSETKSEE). Positions 268 to 285 (NPDLELDLDLDLFNPDEF) are enriched in acidic residues.

This sequence belongs to the Mediator complex subunit 4 family. As to quaternary structure, component of the Mediator complex.

It localises to the nucleus. Component of the Mediator complex, a coactivator involved in the regulated transcription of nearly all RNA polymerase II-dependent genes. Mediator functions as a bridge to convey information from gene-specific regulatory proteins to the basal RNA polymerase II transcription machinery. Mediator is recruited to promoters by direct interactions with regulatory proteins and serves as a scaffold for the assembly of a functional preinitiation complex with RNA polymerase II and the general transcription factors. In Kluyveromyces lactis (strain ATCC 8585 / CBS 2359 / DSM 70799 / NBRC 1267 / NRRL Y-1140 / WM37) (Yeast), this protein is Mediator of RNA polymerase II transcription subunit 4 (MED4).